The chain runs to 292 residues: Glycine--tRNA ligase alpha subunit (292 aa).

It belongs to the class-II aminoacyl-tRNA synthetase family. In terms of assembly, tetramer of two alpha and two beta subunits.

It localises to the cytoplasm. It catalyses the reaction tRNA(Gly) + glycine + ATP = glycyl-tRNA(Gly) + AMP + diphosphate. The sequence is that of Glycine--tRNA ligase alpha subunit from Pelotomaculum thermopropionicum (strain DSM 13744 / JCM 10971 / SI).